Reading from the N-terminus, the 291-residue chain is Segregation and condensation protein A (291 aa).

Belongs to the ScpA family. In terms of assembly, component of a cohesin-like complex composed of ScpA, ScpB and the Smc homodimer, in which ScpA and ScpB bind to the head domain of Smc. The presence of the three proteins is required for the association of the complex with DNA.

The protein localises to the cytoplasm. In terms of biological role, participates in chromosomal partition during cell division. May act via the formation of a condensin-like complex containing Smc and ScpB that pull DNA away from mid-cell into both cell halves. The sequence is that of Segregation and condensation protein A from Malacoplasma penetrans (strain HF-2) (Mycoplasma penetrans).